The sequence spans 212 residues: Imidazole glycerol phosphate synthase subunit HisH (212 aa).

The 210-residue stretch at 3–212 (TVAVIDYGMG…QNFAAWDGRW (210 aa)) folds into the Glutamine amidotransferase type-1 domain. Catalysis depends on Cys-81, which acts as the Nucleophile. Catalysis depends on residues His-190 and Glu-192.

In terms of assembly, heterodimer of HisH and HisF.

It is found in the cytoplasm. The enzyme catalyses 5-[(5-phospho-1-deoxy-D-ribulos-1-ylimino)methylamino]-1-(5-phospho-beta-D-ribosyl)imidazole-4-carboxamide + L-glutamine = D-erythro-1-(imidazol-4-yl)glycerol 3-phosphate + 5-amino-1-(5-phospho-beta-D-ribosyl)imidazole-4-carboxamide + L-glutamate + H(+). It catalyses the reaction L-glutamine + H2O = L-glutamate + NH4(+). It participates in amino-acid biosynthesis; L-histidine biosynthesis; L-histidine from 5-phospho-alpha-D-ribose 1-diphosphate: step 5/9. Functionally, IGPS catalyzes the conversion of PRFAR and glutamine to IGP, AICAR and glutamate. The HisH subunit catalyzes the hydrolysis of glutamine to glutamate and ammonia as part of the synthesis of IGP and AICAR. The resulting ammonia molecule is channeled to the active site of HisF. The sequence is that of Imidazole glycerol phosphate synthase subunit HisH from Pseudomonas syringae pv. syringae (strain B728a).